The sequence spans 526 residues: Vang-like protein 1 (526 aa).

The span at methionine 1–serine 15 shows a compositional bias: low complexity. A disordered region spans residues methionine 1 to histidine 87. At methionine 1 to glycine 114 the chain is on the cytoplasmic side. The span at glycine 75–histidine 87 shows a compositional bias: polar residues. Phosphoserine occurs at positions 88 and 90. The helical transmembrane segment at leucine 115–leucine 135 threads the bilayer. The Extracellular segment spans residues proline 136–glycine 153. The helical transmembrane segment at leucine 154 to phenylalanine 174 threads the bilayer. At arginine 175–valine 184 the chain is on the cytoplasmic side. Residues phenylalanine 185–phenylalanine 205 traverse the membrane as a helical segment. Topologically, residues tyrosine 206–tyrosine 224 are extracellular. Residues alanine 225 to leucine 245 form a helical membrane-spanning segment. Topologically, residues arginine 246–valine 526 are cytoplasmic.

It belongs to the Vang family. In terms of assembly, heterodimer with Vangl2. Interacts through its C-terminal region with the N-terminal half of DVL1, DVL2 and DVL3. The PDZ domain of DVL1, DVL2 and DVL3 is required for the interaction.

The protein localises to the cell membrane. The protein is Vang-like protein 1 (Vangl1) of Mus musculus (Mouse).